Here is a 587-residue protein sequence, read N- to C-terminus: Aspartate--tRNA ligase (587 aa).

Position 174 (Glu-174) interacts with L-aspartate. An aspartate region spans residues 198-201; the sequence is QTFK. L-aspartate is bound at residue Arg-220. Residues 220 to 222 and Gln-229 contribute to the ATP site; that span reads RDE. His-447 provides a ligand contact to L-aspartate. Glu-481 serves as a coordination point for ATP. Arg-488 is an L-aspartate binding site. Residue 533-536 participates in ATP binding; the sequence is GLDR.

It belongs to the class-II aminoacyl-tRNA synthetase family. Type 1 subfamily. As to quaternary structure, homodimer.

The protein resides in the cytoplasm. It carries out the reaction tRNA(Asp) + L-aspartate + ATP = L-aspartyl-tRNA(Asp) + AMP + diphosphate. Functionally, catalyzes the attachment of L-aspartate to tRNA(Asp) in a two-step reaction: L-aspartate is first activated by ATP to form Asp-AMP and then transferred to the acceptor end of tRNA(Asp). The sequence is that of Aspartate--tRNA ligase from Porphyromonas gingivalis (strain ATCC BAA-308 / W83).